The following is a 547-amino-acid chain: Trigger factor-like protein TIG, Chloroplastic (547 aa).

The transit peptide at 1–77 (MELCVISTTT…SHGGNFRLFA (77 aa)) directs the protein to the chloroplast. A78 is subject to N-acetylalanine. The 96-residue stretch at 271 to 366 (GDLAVVDISA…LFYRDLPTLD (96 aa)) folds into the PPIase FKBP-type domain.

It belongs to the FKBP-type PPIase family. Tig subfamily.

Its subcellular location is the plastid. The protein resides in the chloroplast. The enzyme catalyses [protein]-peptidylproline (omega=180) = [protein]-peptidylproline (omega=0). Functionally, involved in protein export. Acts as a chaperone by maintaining the newly synthesized protein in an open conformation. Functions as a peptidyl-prolyl cis-trans isomerase. The chain is Trigger factor-like protein TIG, Chloroplastic (TIG) from Arabidopsis thaliana (Mouse-ear cress).